A 341-amino-acid polypeptide reads, in one-letter code: Geranylgeranyl transferase type-2 subunit beta (341 aa).

PFTB repeat units lie at residues 15–55 (KSKH…ITMN), 62–104 (QQDV…KIYD), 122–163 (RERL…SLLN), 170–211 (ADTA…AIMN), 223–264 (VKLI…SILK), and 271–313 (LKIL…SLID). Geranylgeranyl diphosphate-binding positions include 196 to 198 (HAA) and 243 to 255 (RPEK…YSWW). Residues aspartate 249, cysteine 251, and histidine 301 each contribute to the Zn(2+) site.

It belongs to the protein prenyltransferase subunit beta family. Heterodimer of an alpha and a beta subunit. Zn(2+) serves as cofactor.

It carries out the reaction geranylgeranyl diphosphate + L-cysteinyl-[protein] = S-geranylgeranyl-L-cysteinyl-[protein] + diphosphate. Its function is as follows. Catalyzes the transfer of a geranyl-geranyl moiety from geranyl-geranyl pyrophosphate to proteins having the C-terminal -XCC or -XCXC, where both cysteines may become modified. Acts on YPT1 and SEC4. The chain is Geranylgeranyl transferase type-2 subunit beta (BET2) from Candida albicans (Yeast).